A 431-amino-acid chain; its full sequence is Trigger factor (431 aa).

The region spanning Thr161–Pro245 is the PPIase FKBP-type domain.

The protein belongs to the FKBP-type PPIase family. Tig subfamily.

Its subcellular location is the cytoplasm. The catalysed reaction is [protein]-peptidylproline (omega=180) = [protein]-peptidylproline (omega=0). Functionally, involved in protein export. Acts as a chaperone by maintaining the newly synthesized protein in an open conformation. Functions as a peptidyl-prolyl cis-trans isomerase. The protein is Trigger factor of Chloroherpeton thalassium (strain ATCC 35110 / GB-78).